The sequence spans 956 residues: Endogenous retrovirus group K member 8 Pol protein (956 aa).

Residues L57 to I245 form the Reverse transcriptase domain. The LPQG signature appears at L161–G164. Positions Y195–D198 match the YXDD motif. The region spanning L460–I590 is the RNase H type-1 domain. Residues D469, E497, D517, and D582 each coordinate Mg(2+). An Integrase-type zinc finger spans residues S587–Q628. Zn(2+) is bound by residues H596, H600, C624, and C627. The Integrase catalytic domain maps to R642–K803. The segment at residues K811–E859 is a DNA-binding region (integrase-type). The disordered stretch occupies residues A864–V890. Residues S869 to D881 show a composition bias toward polar residues.

This sequence belongs to the beta type-B retroviral polymerase family. HERV class-II K(HML-2) pol subfamily.

The enzyme catalyses DNA(n) + a 2'-deoxyribonucleoside 5'-triphosphate = DNA(n+1) + diphosphate. It catalyses the reaction Endonucleolytic cleavage to 5'-phosphomonoester.. In terms of biological role, early post-infection, the reverse transcriptase converts the viral RNA genome into double-stranded viral DNA. The RNase H domain of the reverse transcriptase performs two functions. It degrades the RNA template and specifically removes the RNA primer from the RNA/DNA hybrid. Following nuclear import, the integrase catalyzes the insertion of the linear, double-stranded viral DNA into the host cell chromosome. Endogenous Pol proteins may have kept, lost or modified their original function during evolution. The protein is Endogenous retrovirus group K member 8 Pol protein (ERVK-8) of Homo sapiens (Human).